A 116-amino-acid polypeptide reads, in one-letter code: SPbeta prophage-derived uncharacterized protein YoqA (116 aa).

This is SPbeta prophage-derived uncharacterized protein YoqA (yoqA) from Bacillus subtilis (strain 168).